The chain runs to 136 residues: Protein BUNDLE SHEATH DEFECTIVE 2, chloroplastic (136 aa).

A chloroplast-targeting transit peptide spans 1–56 (MANSLCFFSSPPTFCFQSPSKNPKPSHFFSTNDNTSSLVQKRELLQTSRSQSFEVK). Residues 62–133 (PQGTKPNSLV…AGFIGGFLST (72 aa)) form a CR-type zinc finger. Positions 72, 75, 78, 80, 83, 86, 107, 110, 115, 118, and 121 each coordinate Zn(2+).

It belongs to the BSD2 chaperone family. Interacts with the RuBisCo large subunit (RbcL) assembled as an intermediate complex made of eight RbcL and eight BSD2 subunits.

The protein localises to the plastid. The protein resides in the chloroplast stroma. Chloroplast chaperone required for RuBisCo biogenesis and translational regulation of the RuBisCo large subunit (RbcL). Stabilizes an end-state assembly intermediate of eight RbcL subunits until the small subunits (RBCSs) become available to produce a complete stable RuBisCo complex containing eight small and eight large subunits. This is Protein BUNDLE SHEATH DEFECTIVE 2, chloroplastic from Arabidopsis thaliana (Mouse-ear cress).